Reading from the N-terminus, the 460-residue chain is MTDAREKGFWTGPLEMADPELHALICGEVERQKKTINLIASENYAHQSAMEACGSVLTNKYSEGRVGERYYGGTHWVDRIELLCQKRALELFGLDPDVWGVNVQPYSGSPANFAIYTAVVPPGGRIMGLDLPSGGHLTHGYKTKTRKISASSVYFDSRPYTVGSNGLIDYEGLEKTFTDFLPHILICGYSAYSRDIDYKRLQSIAGRNGAFLFADISHISPLVASGLMNSPFEHCDIVMTTTQKGLRGPRGALIFYRRAVTKNGETVDLDARINFAVFPMLQGGPHNHTIAGIASALLHAGTPEFAEYTRRVVENSRELCSRLQSLGLDILTGGTDNHMLLVDLRSTGVDGAAVEHMCDALGISLNRNAIVGNSSPLSPSGIRVGTYAVTARGFGPEEMREVGDIIGGVVKLCREMTGGRKMSKADLHRVTSDARVMGSEQVLVLRRRVCALAEAYPIYE.

The residue at position 244 (Lys244) is an N6-(pyridoxal phosphate)lysine.

It belongs to the SHMT family. As to quaternary structure, homotetramer. Pyridoxal 5'-phosphate is required as a cofactor.

The protein localises to the cytoplasm. It carries out the reaction (6R)-5,10-methylene-5,6,7,8-tetrahydrofolate + glycine + H2O = (6S)-5,6,7,8-tetrahydrofolate + L-serine. It participates in one-carbon metabolism; tetrahydrofolate interconversion. In terms of biological role, interconversion of serine and glycine. The protein is Serine hydroxymethyltransferase, cytosolic (SHMT-1) of Encephalitozoon cuniculi (strain GB-M1) (Microsporidian parasite).